A 416-amino-acid polypeptide reads, in one-letter code: MSLSNKLSVKDLDVSGKRVFIRVDFNVPLDGKTITNNQRIVAALPTIKYVLENKPKAVILASHLGRPNGEKVDKFSLAPVASELEKLLGKKVNFLDDCVGDNVEKAVNGGSDGEVFLLENLRFHIEEEGSQKKDGEKVKASGEDVKKFRQQLTNLADVYVNDAFGTAHRAHSSMVGLELPQKAAGFLMAKELEYFAKALENPVRPFLAILGGAKVSDKIQLIDNLLDKVDLLIVGGGMSFTFKKVLDNMPIGDSLFDEAGAKNVENLVAKAKKNNVKIVLPVDFITADKFDKDAKTSTATEDEGIPDNWMGLDAGPKSNELFAKTVAEAKTIVWNGPPGVFEFDNFAKGTKSLLDAAVKSAESGNTVIIGGGDTATVAKKYGVVDKLSHVSTGGGASLELLEGKELPGVVAISDKK.

Positions 23, 24, 25, 26, 38, 39, 62, 63, 65, 66, 121, 122, 168, and 169 each coordinate (2R)-3-phosphoglycerate. Residue G212 participates in ADP binding. G212 provides a ligand contact to CDP. Positions 213 and 214 each coordinate AMP. Residue A213 coordinates ATP. Position 213 (A213) interacts with Mg(2+). D217 lines the CDP pocket. A Mg(2+)-binding site is contributed by D217. Position 218 (K218) interacts with AMP. Residue K218 coordinates ATP. G236 is an ADP binding site. Residue G236 coordinates CDP. Residues G237 and G311 each coordinate AMP. The ATP site is built by G237 and G311. CDP contacts are provided by G336 and F341. Residue F341 coordinates ADP. Residue E342 participates in AMP binding. Residues E342, D373, and T374 each contribute to the ATP site. Residue D373 participates in Mg(2+) binding.

This sequence belongs to the phosphoglycerate kinase family. In terms of assembly, monomer. The cofactor is Mg(2+).

Its subcellular location is the cytoplasm. It localises to the mitochondrion. The catalysed reaction is (2R)-3-phosphoglycerate + ATP = (2R)-3-phospho-glyceroyl phosphate + ADP. Its pathway is carbohydrate degradation; glycolysis; pyruvate from D-glyceraldehyde 3-phosphate: step 2/5. Functionally, catalyzes one of the two ATP producing reactions in the glycolytic pathway via the reversible conversion of 1,3-diphosphoglycerate to 3-phosphoglycerate. Both L- and D- forms of purine and pyrimidine nucleotides can be used as substrates, but the activity is much lower on pyrimidines. Negatively regulates the biosynthesis of acetyl-CoA from pyruvate in the mitochondrion. This is Phosphoglycerate kinase (PGK1) from Debaryomyces hansenii (strain ATCC 36239 / CBS 767 / BCRC 21394 / JCM 1990 / NBRC 0083 / IGC 2968) (Yeast).